Consider the following 435-residue polypeptide: Xylose isomerase (435 aa).

Active-site residues include His100 and Asp103. Mg(2+) contacts are provided by Glu231, Glu267, His270, Asp295, Asp306, Asp308, and Asp338.

Belongs to the xylose isomerase family. As to quaternary structure, homotetramer. Requires Mg(2+) as cofactor.

The protein resides in the cytoplasm. It carries out the reaction alpha-D-xylose = alpha-D-xylulofuranose. In Brucella anthropi (strain ATCC 49188 / DSM 6882 / CCUG 24695 / JCM 21032 / LMG 3331 / NBRC 15819 / NCTC 12168 / Alc 37) (Ochrobactrum anthropi), this protein is Xylose isomerase.